A 433-amino-acid chain; its full sequence is Serine hydroxymethyltransferase (433 aa).

Residues L132 and G136–L138 each bind (6S)-5,6,7,8-tetrahydrofolate. Residue K241 is modified to N6-(pyridoxal phosphate)lysine.

This sequence belongs to the SHMT family. In terms of assembly, homodimer. It depends on pyridoxal 5'-phosphate as a cofactor.

The protein resides in the cytoplasm. It carries out the reaction (6R)-5,10-methylene-5,6,7,8-tetrahydrofolate + glycine + H2O = (6S)-5,6,7,8-tetrahydrofolate + L-serine. It participates in one-carbon metabolism; tetrahydrofolate interconversion. Its pathway is amino-acid biosynthesis; glycine biosynthesis; glycine from L-serine: step 1/1. In terms of biological role, catalyzes the reversible interconversion of serine and glycine with tetrahydrofolate (THF) serving as the one-carbon carrier. This reaction serves as the major source of one-carbon groups required for the biosynthesis of purines, thymidylate, methionine, and other important biomolecules. Also exhibits THF-independent aldolase activity toward beta-hydroxyamino acids, producing glycine and aldehydes, via a retro-aldol mechanism. This is Serine hydroxymethyltransferase from Bradyrhizobium sp. (strain ORS 278).